A 569-amino-acid chain; its full sequence is Protein Noxp20 (569 aa).

Disordered stretches follow at residues methionine 1–threonine 87, glycine 102–arginine 126, and alanine 165–glycine 208. Threonine 197 bears the Phosphothreonine mark. Serine 262 bears the Phosphoserine mark. Positions valine 404–lysine 439 are disordered.

The protein belongs to the FAM114 family. In terms of tissue distribution, over-expressed in brain. Also detected in lung, stomach, and in a lower extent in testis and thymus.

Its subcellular location is the cytoplasm. Its function is as follows. May play a role in neuronal cell development. The polypeptide is Protein Noxp20 (Fam114a1) (Mus musculus (Mouse)).